The sequence spans 137 residues: Large ribosomal subunit protein uL16 (137 aa).

Belongs to the universal ribosomal protein uL16 family. In terms of assembly, part of the 50S ribosomal subunit.

Binds 23S rRNA and is also seen to make contacts with the A and possibly P site tRNAs. This Pseudomonas fluorescens (strain Pf0-1) protein is Large ribosomal subunit protein uL16.